A 399-amino-acid polypeptide reads, in one-letter code: tRNA-specific 2-thiouridylase MnmA (399 aa).

ATP contacts are provided by residues 7–14 and Met-33; that span reads AMSGGVDS. The active-site Nucleophile is the Cys-128. An intrachain disulfide couples Cys-128 to Cys-224. ATP is bound at residue Gly-152. Residues 174-176 are interaction with tRNA; that stretch reads KDQ. The Cysteine persulfide intermediate role is filled by Cys-224. The tract at residues 333–334 is interaction with tRNA; that stretch reads RY.

It belongs to the MnmA/TRMU family.

Its subcellular location is the cytoplasm. The catalysed reaction is S-sulfanyl-L-cysteinyl-[protein] + uridine(34) in tRNA + AH2 + ATP = 2-thiouridine(34) in tRNA + L-cysteinyl-[protein] + A + AMP + diphosphate + H(+). Its function is as follows. Catalyzes the 2-thiolation of uridine at the wobble position (U34) of tRNA, leading to the formation of s(2)U34. The polypeptide is tRNA-specific 2-thiouridylase MnmA (Rhodopirellula baltica (strain DSM 10527 / NCIMB 13988 / SH1)).